The sequence spans 531 residues: Zinc finger C2HC domain-containing protein 1C (531 aa).

A disordered region spans residues 16 to 45; it reads MLPHNTTEAPGPHSAKQDSYEQSDSSQQSL. The span at 35–44 shows a compositional bias: low complexity; the sequence is YEQSDSSQQS. The stretch at 209-264 forms a coiled coil; the sequence is VQIRRLEAAGESLEEEIRRKQILLRGKLKKTEEELRRIQTQKEQAKENENRELQKI. Disordered regions lie at residues 290-318 and 334-387; these read FEEE…QLSD and NKIR…PQLG. Positions 293–305 are enriched in basic and acidic residues; it reads EFSRDKREDETWE. The span at 306–315 shows a compositional bias: polar residues; it reads RSQQNSSPFQ. Positions 335-345 are enriched in basic and acidic residues; the sequence is KIRDRVSEPSM. The span at 366–380 shows a compositional bias: low complexity; the sequence is SSLSMAPDSSGSSGS. 2 C2HC/C3H-type zinc fingers span residues 385–414 and 493–522; these read QLGE…MQGS and DYIQ…IKNR. Cys389, Cys392, His404, Cys408, Cys497, Cys500, His512, and Cys516 together coordinate Zn(2+).

This sequence belongs to the ZC2HC1 family. Zn(2+) is required as a cofactor.

In Macaca fascicularis (Crab-eating macaque), this protein is Zinc finger C2HC domain-containing protein 1C (ZC2HC1C).